The sequence spans 55 residues: Large ribosomal subunit protein bL32c (55 aa).

It belongs to the bacterial ribosomal protein bL32 family.

It localises to the plastid. It is found in the chloroplast. This Atropa belladonna (Belladonna) protein is Large ribosomal subunit protein bL32c.